The sequence spans 643 residues: MIAATPMPLLKQPDRLEARLRELPAEPGVYFMRDASDRILYIGKSKKLRSRVRSYFRDLERLNPRINLMVRQVCEIEIIVTDTEAEALALEANLIKQHQPHFNVLLKDDKKYPYLCITWSDDYPRIFITRKRRLGNSRDRYYGPYVDTRLLRHTLFLVKRLFPLRQRPQPLFKDRTCLNYDIGRCPGVCQSLIRPDDYRKTLQKVAMIFQGRSSELVELLEAQMLQAAENLEFEKAAKIRDQIRGLEGLGAEQKVQLPDDRISRDAIALAMDEQHACIQLFQIRAGKLVGRLGFVADAQSGSAAAIAQRVLEEHYASVDSVEIPQEVLVQHDLPEAELLEVWLSERRGRKVEILSPQRQIKADLIAMVERNAEYELARTQQSAERHTASLIDLADLLDLPELPRRIEGYDISHIQGSDAVASQVVFIDGLPAKQHYRRYKIRNPEVRAGHSDDFASLAEVLHRRFRKFAEAKARGESLAPSEQRQGSLLRPDDLADFPDLVMIDGGKGQLSAVVEVLRNLNLLEDVKLCSLAKKREEIFLPGASDPLPTDAEQPGVQLLRRLRDEAHRFAVSFHRQKRTERMRRSRLDDIPGLGHKRQKELLAHFRSIDYLRLATPEQIAEVPGIGAVLAQQIWGYFHPSETA.

Positions 25–104 constitute a GIY-YIG domain; that stretch reads AEPGVYFMRD…IKQHQPHFNV (80 aa). One can recognise a UVR domain in the interval 214 to 249; sequence SELVELLEAQMLQAAENLEFEKAAKIRDQIRGLEGL.

The protein belongs to the UvrC family. In terms of assembly, interacts with UvrB in an incision complex.

The protein localises to the cytoplasm. Functionally, the UvrABC repair system catalyzes the recognition and processing of DNA lesions. UvrC both incises the 5' and 3' sides of the lesion. The N-terminal half is responsible for the 3' incision and the C-terminal half is responsible for the 5' incision. In Synechococcus elongatus (strain ATCC 33912 / PCC 7942 / FACHB-805) (Anacystis nidulans R2), this protein is UvrABC system protein C.